Consider the following 187-residue polypeptide: MNLQHHFLIAMPSLQDPQFKRSVIYICEHDEKGAMGLVINKPLEQLTVETILEKLKIKSPSRDPAIRLDNVVLAGGPLAEDRGFILHSPQEGFASSIHISPETMITTSKDVLETLGTSGQPKNLLVALGYASWRQGQLEQELLDNVWLTTEADTHILFNTPIAERWQAAANKLGINIFNIAPQAGHA.

It belongs to the UPF0301 (AlgH) family.

This Yersinia pseudotuberculosis serotype IB (strain PB1/+) protein is UPF0301 protein YPTS_3341.